Reading from the N-terminus, the 796-residue chain is Vacuolar protein sorting-associated protein 35 (796 aa).

Ser7 is modified (phosphoserine). 2 interaction with SNX3 regions span residues 25 to 44 (VQSFQMKRCLDKNKLMDALK) and 205 to 215 (DREKRERERQE). The interval 438-796 (CYVLSNVLDY…EGPIYEGLIL (359 aa)) is interaction with SLC11A2. Residues 500-693 (SEDPDQQYLI…DKNGEELHGG (194 aa)) form an interaction with IGF2R cytoplasmic domain region. Ser783 carries the post-translational modification Phosphoserine. Tyr791 is modified (phosphotyrosine).

This sequence belongs to the VPS35 family. As to quaternary structure, component of the heterotrimeric retromer cargo-selective complex (CSC), also decribed as vacuolar protein sorting subcomplex (VPS), formed by VPS26 (VPS26A or VPS26B), VPS29 and VPS35. The CSC has a highly elongated structure with VPS26 and VPS29 binding independently at opposite distal ends of VPS35 as central platform. The CSC is believed to associate with variable sorting nexins to form functionally distinct retromer complex variants. The originally described retromer complex (also called SNX-BAR retromer) is a pentamer containing the CSC and a heterodimeric membrane-deforming subcomplex formed between SNX1 or SNX2 and SNX5 or SNX6 (also called SNX-BAR subcomplex); the respective CSC and SNX-BAR subcomplexes associate with low affinity. The CSC associates with SNX3 to form a SNX3-retromer complex. The CSC associates with SNX27, the WASH complex and the SNX-BAR subcomplex to form the SNX27-retromer complex. Interacts with VPS26A, VPS26B, VPS29, SNX1, SNX2, IGF2R, SNX3, GOLPH3, LRRK2, SLC11A2, WASHC2A, WASHC2C, FKBP15, WASHC1, RAB7A, SNX27, WASHC5, EHD1. Interacts with MAGEL2; leading to recruitment of the TRIM27:MAGEL2 E3 ubiquitin ligase complex retromer-containing endosomes. Interacts with SORCS2. In terms of assembly, (Microbial infection) Interacts with human papillomavirus 16 minor capsid protein L2 (via C-terminus); this interaction mediates the transport of the capsid from the early endosome to the Golgi apparatus. As to expression, ubiquitous. Highly expressed in heart, brain, placenta, skeletal muscle, spleen, thymus, testis, ovary, small intestine, kidney and colon.

The protein resides in the cytoplasm. It localises to the membrane. The protein localises to the endosome. Its subcellular location is the early endosome. It is found in the late endosome. Its function is as follows. Acts as a component of the retromer cargo-selective complex (CSC). The CSC is believed to be the core functional component of retromer or respective retromer complex variants acting to prevent missorting of selected transmembrane cargo proteins into the lysosomal degradation pathway. The recruitment of the CSC to the endosomal membrane involves RAB7A and SNX3. The CSC seems to associate with the cytoplasmic domain of cargo proteins predominantly via VPS35; however, these interactions seem to be of low affinity and retromer SNX proteins may also contribute to cargo selectivity thus questioning the classical function of the CSC. The SNX-BAR retromer mediates retrograde transport of cargo proteins from endosomes to the trans-Golgi network (TGN) and is involved in endosome-to-plasma membrane transport for cargo protein recycling. The SNX3-retromer mediates the retrograde endosome-to-TGN transport of WLS distinct from the SNX-BAR retromer pathway. The SNX27-retromer is believed to be involved in endosome-to-plasma membrane trafficking and recycling of a broad spectrum of cargo proteins. The CSC seems to act as recruitment hub for other proteins, such as the WASH complex and TBC1D5. Required for retrograde transport of lysosomal enzyme receptor IGF2R and SLC11A2. Required to regulate transcytosis of the polymeric immunoglobulin receptor (pIgR-pIgA). Required for endosomal localization of WASHC2C. Mediates the association of the CSC with the WASH complex via WASHC2. Required for the endosomal localization of TBC1D5. In terms of biological role, (Microbial infection) The heterotrimeric retromer cargo-selective complex (CSC) mediates the exit of human papillomavirus from the early endosome and the delivery to the Golgi apparatus. The protein is Vacuolar protein sorting-associated protein 35 of Homo sapiens (Human).